A 398-amino-acid polypeptide reads, in one-letter code: MKITNLPEVFTAALPVLKRINEAGYEAYFVGGSVRDLLLNRHIHDVDIATSAYPMEIKQIFKKTIDTGIKHGTVTVLYEGESYEITTFRTESGYQDFRRPDHVTFVQNLSEDLKRRDFTINALAMGVDGNVIDHFDGLGDLDKHLIRAVGKAENRFHEDALRMMRAVRFMSQLQFTLEPETERAISDNHELLSKISVERIRDEFVKMGIAPGSQKAFQIFLDTGLSEEVPGFKGKKDNLALYPQLNFSPTTEANLWALMIILLKLPNEKIPSFMRMWKNSNAMERQVADIVTFFDLVSSRAPSNYDLYQAGLETIASTIDLAHILGQPINGSALVDRYEALPIKNNHDLVIDGHFLLKNGVPAGPRVGLLLEEIKKAVLEGVISNNEAAITEFLSLNN.

Residues Gly32 and Arg35 each contribute to the ATP site. Residues Gly32 and Arg35 each coordinate CTP. Positions 45 and 47 each coordinate Mg(2+). Residues Arg116, Asp159, Arg162, Arg165, and Arg168 each coordinate ATP. Positions 116, 159, 162, 165, and 168 each coordinate CTP.

It belongs to the tRNA nucleotidyltransferase/poly(A) polymerase family. Bacterial CCA-adding enzyme type 3 subfamily. Homodimer. Mg(2+) serves as cofactor.

The enzyme catalyses a tRNA precursor + 2 CTP + ATP = a tRNA with a 3' CCA end + 3 diphosphate. It catalyses the reaction a tRNA with a 3' CCA end + 2 CTP + ATP = a tRNA with a 3' CCACCA end + 3 diphosphate. In terms of biological role, catalyzes the addition and repair of the essential 3'-terminal CCA sequence in tRNAs without using a nucleic acid template. Adds these three nucleotides in the order of C, C, and A to the tRNA nucleotide-73, using CTP and ATP as substrates and producing inorganic pyrophosphate. tRNA 3'-terminal CCA addition is required both for tRNA processing and repair. Also involved in tRNA surveillance by mediating tandem CCA addition to generate a CCACCA at the 3' terminus of unstable tRNAs. While stable tRNAs receive only 3'-terminal CCA, unstable tRNAs are marked with CCACCA and rapidly degraded. In Lactobacillus gasseri (strain ATCC 33323 / DSM 20243 / BCRC 14619 / CIP 102991 / JCM 1131 / KCTC 3163 / NCIMB 11718 / NCTC 13722 / AM63), this protein is CCA-adding enzyme.